Consider the following 782-residue polypeptide: Endonuclease MutS2 (782 aa).

Position 336–343 (336–343) interacts with ATP; sequence GPNTGGKT. One can recognise a Smr domain in the interval 707-782; the sequence is LDLRGYRYEE…GFGVTVAELK (76 aa).

It belongs to the DNA mismatch repair MutS family. MutS2 subfamily. Homodimer. Binds to stalled ribosomes, contacting rRNA.

Its function is as follows. Endonuclease that is involved in the suppression of homologous recombination and thus may have a key role in the control of bacterial genetic diversity. Acts as a ribosome collision sensor, splitting the ribosome into its 2 subunits. Detects stalled/collided 70S ribosomes which it binds and splits by an ATP-hydrolysis driven conformational change. Acts upstream of the ribosome quality control system (RQC), a ribosome-associated complex that mediates the extraction of incompletely synthesized nascent chains from stalled ribosomes and their subsequent degradation. Probably generates substrates for RQC. The chain is Endonuclease MutS2 from Staphylococcus epidermidis (strain ATCC 12228 / FDA PCI 1200).